The chain runs to 467 residues: Mothers against decapentaplegic homolog 2 (467 aa).

N-acetylserine is present on Ser2. Thr8 is subject to Phosphothreonine. The region spanning 10-176 (PVVKRLLGWK…YQRVETPVLP (167 aa)) is the MH1 domain. Residue Lys19 is modified to N6-acetyllysine. The Zn(2+) site is built by Cys74, Cys149, Cys161, and His166. Residues 207-217 (PAGIEPQSNYI) are compositionally biased toward polar residues. The interval 207 to 251 (PAGIEPQSNYIPETPPPGYISEDGETSDQQLNQSMDTGSPAELSP) is disordered. Phosphothreonine is present on Thr220. The PY-motif motif lies at 221 to 225 (PPPGY). Over residues 233–243 (SDQQLNQSMDT) the composition is skewed to polar residues. A Phosphoserine; by CAMK2 modification is found at Ser240. Residues Ser245, Ser250, Ser255, Ser458, Ser460, and Ser464 each carry the phosphoserine modification. The MH2 domain maps to 274–467 (WCSIAYYELN…SPSVRCSSMS (194 aa)). Phosphoserine; by TGFBR1 is present on residues Ser465 and Ser467.

Belongs to the dwarfin/SMAD family. As to quaternary structure, monomer; in the absence of TGF-beta. Heterodimer; in the presence of TGF-beta. Forms a heterodimer with co-SMAD, SMAD4, in the nucleus to form the transactivation complex SMAD2/SMAD4. Found in a complex with SMAD3 and TRIM33 upon addition of TGF-beta. Identified in a complex that contains at least ZNF451, SMAD2, SMAD3 and SMAD4. Interacts (via the MH2 domain) with ZFYVE9; may form trimers with the SMAD4 co-SMAD. Interacts with TAZ/WWRT1. Interacts with FOXH1. Interacts with SNW1. Interacts with CREB-binding protein (CBP) and EP300. Interacts with SNON. Interacts with ALK4/ACVR1B. Interacts with SKOR1. Interacts with SKOR2. Interacts with PRDM16. Interacts (via MH2 domain) with LEMD3. Interacts with RBPMS. Interacts with WWP1. Interacts (dephosphorylated form, via the MH1 and MH2 domains) with RANBP3 (via its C-terminal R domain); the interaction results in the export of dephosphorylated SMAD3 out of the nucleus and termination of the TGF-beta signaling. Interacts with PDPK1 (via PH domain). Interacts with DAB2; the interactions are enhanced upon TGF-beta stimulation. Interacts with USP15. Interacts with PPP5C. Interacts with LDLRAD4 (via the SMAD interaction motif). Interacts (via MH2 domain) with PMEPA1 (via the SMAD interaction motif). Interacts with ZFHX3. Interacts with ZNF451. Interacts with SMURF2 when phosphorylated on Ser-465/467. Interacts with PPM1A. Interacts with TGF-beta. Interacts with TGFBR1. Interacts with TGIF. Interacts with SMAD3 and TRIM33. Interacts with ZNF580. Interacts with NEDD4L in response to TGF-beta. Interacts with HGS. Interacts with AIP1. Interacts with WWP1. Interacts with PML. Interacts weakly with ZNF8. Interacts (when phosphorylated) with RNF111; RNF111 acts as an enhancer of the transcriptional responses by mediating ubiquitination and degradation of SMAD2 inhibitors. Interacts with YAP1 (when phosphorylated at 'Ser-112'). Interacts when phosphorylated with IPO7; the interaction facilitates translocation of SMAD2 to the nucleus. Interacts with MTMR4; negatively regulates TGF-beta signaling through SMAD2 dephosphorylation and retention in endosomes. Post-translationally, in response to TGF-beta, phosphorylated on the C-terminal SXS motif by TGF-beta and activin type 1 receptor kinases, phosphorylation declines progressively in a KMT5A-dependent manner. Phosphorylation in this motif is required for interaction with a number of proteins including SMURF2, SNON and SMAD4 in response to TGF-beta. Dephosphorylated in this motif by PPM1A leading to disruption of the SMAD2/3-SMAD4 complex, nuclear export and termination of the TGF-beta signaling. In response to decorin, the naturally occurring inhibitor of TGF-beta signaling, phosphorylated on Ser-240 by CaMK2. Phosphorylated by MAPK3 upon EGF stimulation; which increases transcriptional activity and stability, and is blocked by calmodulin. Phosphorylated by PDPK1. In response to TGF-beta, ubiquitinated by NEDD4L; which promotes its degradation. Monoubiquitinated, leading to prevent DNA-binding. Deubiquitination by USP15 alleviates inhibition and promotes activation of TGF-beta target genes. Ubiquitinated by RNF111, leading to its degradation: only SMAD2 proteins that are 'in use' are targeted by RNF111, RNF111 playing a key role in activating SMAD2 and regulating its turnover. In terms of processing, acetylated on Lys-19 by coactivators in response to TGF-beta signaling, which increases transcriptional activity.

The protein localises to the cytoplasm. It is found in the nucleus. Functionally, receptor-regulated SMAD (R-SMAD) that is an intracellular signal transducer and transcriptional modulator activated by TGF-beta (transforming growth factor) and activin type 1 receptor kinases. Binds the TRE element in the promoter region of many genes that are regulated by TGF-beta and, on formation of the SMAD2/SMAD4 complex, activates transcription. Promotes TGFB1-mediated transcription of odontoblastic differentiation genes in dental papilla cells. Positively regulates PDPK1 kinase activity by stimulating its dissociation from the 14-3-3 protein YWHAQ which acts as a negative regulator. The polypeptide is Mothers against decapentaplegic homolog 2 (Smad2) (Mus musculus (Mouse)).